A 281-amino-acid polypeptide reads, in one-letter code: 4-deoxy-L-threo-5-hexosulose-uronate ketol-isomerase (281 aa).

Zn(2+)-binding residues include His-198, His-200, Glu-205, and His-248.

This sequence belongs to the KduI family. Zn(2+) is required as a cofactor.

The catalysed reaction is 5-dehydro-4-deoxy-D-glucuronate = 3-deoxy-D-glycero-2,5-hexodiulosonate. It participates in glycan metabolism; pectin degradation; 2-dehydro-3-deoxy-D-gluconate from pectin: step 4/5. Its function is as follows. Catalyzes the isomerization of 5-dehydro-4-deoxy-D-glucuronate to 3-deoxy-D-glycero-2,5-hexodiulosonate. The polypeptide is 4-deoxy-L-threo-5-hexosulose-uronate ketol-isomerase (Lacticaseibacillus casei (strain BL23) (Lactobacillus casei)).